Here is a 142-residue protein sequence, read N- to C-terminus: MKLLIALFALVTAVNAQNGFGQVGQGGYGGQGGFGGFGGIGGQAGFGGQIGFTGQGGVGGQVGIGQGGVHPGQGGFAGQGSPNQYQPGYGSPVGSGHFHGTNPVESGHFHENPHEYPEHHGDHHREHHEHHGHHEHHGHHRH.

The first 16 residues, 1 to 16, serve as a signal peptide directing secretion; the sequence is MKLLIALFALVTAVNA. A disordered region spans residues 75–142; it reads GFAGQGSPNQ…HHEHHGHHRH (68 aa). Positions 107–124 are enriched in basic and acidic residues; sequence GHFHENPHEYPEHHGDHH. A compositionally biased stretch (basic residues) spans 125–142; that stretch reads REHHEHHGHHEHHGHHRH.

It localises to the secreted. Its function is as follows. Likely to be involved in the establishment of the head. This is Protein spalt-accessory (sala) from Drosophila melanogaster (Fruit fly).